The primary structure comprises 91 residues: Small ribosomal subunit protein bS20 (91 aa).

The interval 72–91 (KNAASRQKSRLAKKLNGLSA) is disordered.

It belongs to the bacterial ribosomal protein bS20 family.

Binds directly to 16S ribosomal RNA. The chain is Small ribosomal subunit protein bS20 from Halalkalibacterium halodurans (strain ATCC BAA-125 / DSM 18197 / FERM 7344 / JCM 9153 / C-125) (Bacillus halodurans).